A 45-amino-acid chain; its full sequence is Large ribosomal subunit protein bL34 (45 aa).

The disordered stretch occupies residues 1–24 (MTKRTFGGTSRKRKRVSGFRVRMR). Residues 10-24 (SRKRKRVSGFRVRMR) show a composition bias toward basic residues.

Belongs to the bacterial ribosomal protein bL34 family.

The protein is Large ribosomal subunit protein bL34 of Prochlorococcus marinus (strain MIT 9303).